Reading from the N-terminus, the 337-residue chain is Protein hairy (337 aa).

Residues 29–48 form an interaction with Topors region; it reads KSDRRSNKPIMEKRRRARIN. In terms of domain architecture, bHLH spans 31–88; that stretch reads DRRSNKPIMEKRRRARINNCLNELKTLILDATKKDPARHSKLEKADILEKTVKHLQEL. In terms of domain architecture, Orange spans 107–136; sequence FKAGFADCVNEVSRFPGIEPAQRRRLLQHL. Disordered stretches follow at residues 146–178 and 259–311; these read ELHQQQRQQQQQSIHAQMLPSPPSSPEQDSQQG and MPQR…VIQR. Residues 263 to 301 show a composition bias toward low complexity; sequence TASTGSASSHSSAGYESAPGSSSSCSYAPPSPANSSYEP. Positions 334–337 match the WRPW motif motif; that stretch reads WRPW.

As to quaternary structure, transcription repression requires formation of a complex with a corepressor protein (Groucho). Interacts with gro (via WPRW motif) and Topors. Ubiquitinated by Topors.

Its subcellular location is the nucleus. Pair-rule protein that regulates embryonic segmentation and adult bristle patterning. Transcriptional repressor of genes that require a bHLH protein for their transcription (e.g. ftz). This is Protein hairy from Drosophila melanogaster (Fruit fly).